The following is a 1395-amino-acid chain: DNA-directed RNA polymerase subunit beta' (1395 aa).

Positions 70, 72, 85, and 88 each coordinate Zn(2+). Mg(2+) is bound by residues aspartate 461, aspartate 463, and aspartate 465. Cysteine 815, cysteine 889, cysteine 896, and cysteine 899 together coordinate Zn(2+).

The protein belongs to the RNA polymerase beta' chain family. The RNAP catalytic core consists of 2 alpha, 1 beta, 1 beta' and 1 omega subunit. When a sigma factor is associated with the core the holoenzyme is formed, which can initiate transcription. Mg(2+) serves as cofactor. The cofactor is Zn(2+).

It catalyses the reaction RNA(n) + a ribonucleoside 5'-triphosphate = RNA(n+1) + diphosphate. Its function is as follows. DNA-dependent RNA polymerase catalyzes the transcription of DNA into RNA using the four ribonucleoside triphosphates as substrates. This chain is DNA-directed RNA polymerase subunit beta', found in Ruthia magnifica subsp. Calyptogena magnifica.